We begin with the raw amino-acid sequence, 212 residues long: Large ribosomal subunit protein uL3 (212 aa).

Gln153 bears the N5-methylglutamine mark.

It belongs to the universal ribosomal protein uL3 family. Part of the 50S ribosomal subunit. Forms a cluster with proteins L14 and L19. Methylated by PrmB.

In terms of biological role, one of the primary rRNA binding proteins, it binds directly near the 3'-end of the 23S rRNA, where it nucleates assembly of the 50S subunit. The sequence is that of Large ribosomal subunit protein uL3 from Shewanella frigidimarina (strain NCIMB 400).